The primary structure comprises 550 residues: Arginine--tRNA ligase (550 aa).

A 'HIGH' region motif is present at residues 130–140 (ANPTGPIHLGG).

This sequence belongs to the class-I aminoacyl-tRNA synthetase family. As to quaternary structure, monomer.

Its subcellular location is the cytoplasm. The catalysed reaction is tRNA(Arg) + L-arginine + ATP = L-arginyl-tRNA(Arg) + AMP + diphosphate. The protein is Arginine--tRNA ligase of Corynebacterium efficiens (strain DSM 44549 / YS-314 / AJ 12310 / JCM 11189 / NBRC 100395).